Here is a 138-residue protein sequence, read N- to C-terminus: ATP synthase subunit g, mitochondrial (138 aa).

Belongs to the ATPase g subunit family. In terms of assembly, F-type ATP synthases have 2 components, the catalytic core F(1) and the membrane-embedded component F(0), linked together by a central stalk and a peripheral stalk. The central stalk, also called rotor shaft, is often seen as part of F(1). The peripheral stalk is seen as part of F(0). F(0) contains the membrane channel next to the rotor. F-type ATP synthases form dimers but each monomer functions independently in ATP generation. The dimer consists of 17 different polypeptides: ATP1 (subunit alpha, 3 molecules per monomer, part of F(1)), ATP2 (subunit beta, 3 copies per monomer, part of F(1)), ATP3 (subunit gamma, part of the central stalk), ATP4 (subunit b, part of the peripheral stalk), ATP5/OSCP (subunit 5/OSCP, part of the peripheral stalk), ATP6 (subunit a, part of the peripheral stalk), ATP7 (subunit d, part of the peripheral stalk), ATP8 (subunit 8, part of the peripheral stalk), OLI1 (subunit c, part of the rotor, 10 molecules per monomer), ATP14 (subunit h, part of the peripheral stalk), ATP15 (subunit epsilon, part of the central stalk), ATP16 (subunit delta, part of the central stalk), ATP17 (subunit f, part of the peripheral stalk), ATP18 (subunit i/j, part of the peripheral stalk), ATP19 (subunit k, dimer-specific, at interface between monomers), ATP20 (subunit g, at interface between monomers), TIM11 (subunit e, at interface between monomers).

It localises to the mitochondrion inner membrane. Functionally, mitochondrial membrane ATP synthase (F(1)F(0) ATP synthase or Complex V) produces ATP from ADP in the presence of a proton gradient across the membrane which is generated by electron transport complexes of the respiratory chain. F-type ATP synthases consist of two structural domains, F(1) - containing the extramembraneous catalytic core, and F(0) - containing the membrane proton channel, linked together by a central stalk and a peripheral stalk. During catalysis, ATP synthesis in the catalytic domain of F(1) is coupled via a rotary mechanism of the central stalk subunits to proton translocation. Part of the complex F(0) domain. Minor subunit located with subunit a/ATP6 in the membrane. Together with subunit e/TIM11, probably contributes to membrane curvature at the site of the ATP synthase dimer, ultimately contributing to formation of cristae. In Yarrowia lipolytica (strain CLIB 122 / E 150) (Yeast), this protein is ATP synthase subunit g, mitochondrial.